The following is a 196-amino-acid chain: O-methyltransferase dpmpI (196 aa).

S-adenosyl-L-methionine is bound by residues 127-128 (GG), Asp152, and 174-175 (SF). Residues 166-196 (NGIEAVPHSFEDPQPIKSKSPRLDNLARERL) are disordered. The segment covering 186-196 (PRLDNLARERL) has biased composition (basic and acidic residues).

The protein belongs to the class I-like SAM-binding methyltransferase superfamily. Cation-independent O-methyltransferase family.

It participates in secondary metabolite biosynthesis; terpenoid biosynthesis. Functionally, O-methyltransferase; part of the gene cluster that mediates the biosynthesis of diterpenoid pyrones. The first step of the pathway is the synthesis of the alpha-pyrone moiety by the polyketide synthase dpmpA via condensation of one acetyl-CoA starter unit with 3 malonyl-CoA units and 2 methylations. The alpha-pyrone is then combined with geranylgeranyl pyrophosphate (GGPP) formed by the GGPP synthase dpmpD through the action of the prenyltransferase dpmpC to yield a linear alpha-pyrone diterpenoid. Subsequent steps in the diterpenoid pyrone biosynthetic pathway involve the decalin core formation, which is initiated by the epoxidation of the C10-C11 olefin by the FAD-dependent oxidoreductase dpmpE, and is followed by a cyclization cascade catalyzed by the terpene cyclase dpmpB. The short chain dehydrogenase/reductase dpmpG then oxidizes the 8S hydroxy group to a ketone and the short chain dehydrogenase/reductase dpmpH reduces the ketone to the 8R hydroxy group to yield higginsianin B. Higginsianin B is further methylated by the methyltransferase dpmpI to produce the intermediate named FDDP B. The cytochrome P450 monooxygenase dpmpJ then oxidizes the C-26 methyl to primary alcohol, producing the final diterpenoid pyrone with a C-26 primary alcohol on the gamma-pyrone moiety named FDDP C. The sequence is that of O-methyltransferase dpmpI from Macrophomina phaseolina (strain MS6) (Charcoal rot fungus).